The sequence spans 587 residues: 2-succinyl-5-enolpyruvyl-6-hydroxy-3-cyclohexene-1-carboxylate synthase (587 aa).

It belongs to the TPP enzyme family. MenD subfamily. Homodimer. It depends on Mg(2+) as a cofactor. Mn(2+) is required as a cofactor. Requires thiamine diphosphate as cofactor.

The enzyme catalyses isochorismate + 2-oxoglutarate + H(+) = 5-enolpyruvoyl-6-hydroxy-2-succinyl-cyclohex-3-ene-1-carboxylate + CO2. It participates in quinol/quinone metabolism; 1,4-dihydroxy-2-naphthoate biosynthesis; 1,4-dihydroxy-2-naphthoate from chorismate: step 2/7. It functions in the pathway cofactor biosynthesis; phylloquinone biosynthesis. Its function is as follows. Catalyzes the thiamine diphosphate-dependent decarboxylation of 2-oxoglutarate and the subsequent addition of the resulting succinic semialdehyde-thiamine pyrophosphate anion to isochorismate to yield 2-succinyl-5-enolpyruvyl-6-hydroxy-3-cyclohexene-1-carboxylate (SEPHCHC). This chain is 2-succinyl-5-enolpyruvyl-6-hydroxy-3-cyclohexene-1-carboxylate synthase, found in Prochlorococcus marinus (strain MIT 9215).